Reading from the N-terminus, the 321-residue chain is Transaldolase (321 aa).

Lysine 132 serves as the catalytic Schiff-base intermediate with substrate.

Belongs to the transaldolase family. Type 1 subfamily. In terms of assembly, homodimer.

The protein resides in the cytoplasm. The catalysed reaction is D-sedoheptulose 7-phosphate + D-glyceraldehyde 3-phosphate = D-erythrose 4-phosphate + beta-D-fructose 6-phosphate. It functions in the pathway carbohydrate degradation; pentose phosphate pathway; D-glyceraldehyde 3-phosphate and beta-D-fructose 6-phosphate from D-ribose 5-phosphate and D-xylulose 5-phosphate (non-oxidative stage): step 2/3. Its function is as follows. Transaldolase is important for the balance of metabolites in the pentose-phosphate pathway. This chain is Transaldolase, found in Rhizobium etli (strain CIAT 652).